A 334-amino-acid polypeptide reads, in one-letter code: Heat-inducible transcription repressor HrcA (334 aa).

Belongs to the HrcA family.

Its function is as follows. Negative regulator of class I heat shock genes (grpE-dnaK-dnaJ and groELS operons). Prevents heat-shock induction of these operons. The chain is Heat-inducible transcription repressor HrcA from Acidovorax ebreus (strain TPSY) (Diaphorobacter sp. (strain TPSY)).